Consider the following 190-residue polypeptide: Ribonuclease HII (190 aa).

The 188-residue stretch at 3–190 folds into the RNase H type-2 domain; it reads KLIAGVDEVG…KPVKALLEEK (188 aa). Residues Asp-9, Glu-10, and Asp-101 each coordinate a divalent metal cation.

It belongs to the RNase HII family. Mn(2+) serves as cofactor. Requires Mg(2+) as cofactor.

It is found in the cytoplasm. It catalyses the reaction Endonucleolytic cleavage to 5'-phosphomonoester.. Endonuclease that specifically degrades the RNA of RNA-DNA hybrids. The protein is Ribonuclease HII of Alteromonas mediterranea (strain DSM 17117 / CIP 110805 / LMG 28347 / Deep ecotype).